A 240-amino-acid polypeptide reads, in one-letter code: MKGTGGVVVGTQNPVRDYNHSTDEEYQRLRRLADEAYKKRDQLSHESQTAYQQGDKKLAHELSEKSKAQLKTAEDFNMQAAEYVFVENNADSSSNEIDLHGLYVKEALFILQKRIKFAIDHNEPQLNVIVGKGLHSQNGIAKLKPSIEEFCAKHGIRNHLEKGNSGVLVLELQGVQMQMDGPAVNAPTNQYNAQPHPQYNNNGGQPQGQAQNYNNSGNDNKDSTLTSIFKIFCNCIQSLA.

Positions 1 to 24 are disordered; that stretch reads MKGTGGVVVGTQNPVRDYNHSTDE. Residues 97-173 form the Smr domain; that stretch reads IDLHGLYVKE…NSGVLVLELQ (77 aa). The disordered stretch occupies residues 181-219; it reads GPAVNAPTNQYNAQPHPQYNNNGGQPQGQAQNYNNSGND. The segment covering 194 to 215 has biased composition (low complexity); it reads QPHPQYNNNGGQPQGQAQNYNN.

Its subcellular location is the cytoplasm. In terms of biological role, endonuclease involved in nonstop mRNA decay via the formation of mRNA cleavage fragments in the vicinity of stalled ribosomes. The protein is Endonuclease NBR9 of Saccharomyces cerevisiae (strain ATCC 204508 / S288c) (Baker's yeast).